The sequence spans 89 residues: HssA/B-like protein 16 (89 aa).

The protein belongs to the hssA/B family.

This is HssA/B-like protein 16 (hssl16) from Dictyostelium discoideum (Social amoeba).